Here is a 247-residue protein sequence, read N- to C-terminus: Cobalt transport protein CbiM (247 aa).

An N-terminal signal peptide occupies residues 1–21 (MVGWGVLILLMVLWLPRQAYA). 7 helical membrane-spanning segments follow: residues 27 to 47 (GYLP…ALIL), 64 to 84 (LVLA…LPSV), 96 to 116 (LGAV…ILLF), 119 to 139 (LLLA…MAVV), 159 to 179 (GVAV…TTSL), 181 to 201 (LALA…KFAS), and 202 to 222 (IFAV…VIMV).

This sequence belongs to the CbiM family. As to quaternary structure, forms an energy-coupling factor (ECF) transporter complex composed of an ATP-binding protein (A component, CbiO), a transmembrane protein (T component, CbiQ) and 2 possible substrate-capture proteins (S components, CbiM and CbiN) of unknown stoichimetry.

It localises to the cell membrane. Its pathway is cofactor biosynthesis; adenosylcobalamin biosynthesis. Part of the energy-coupling factor (ECF) transporter complex CbiMNOQ involved in cobalt import. The chain is Cobalt transport protein CbiM from Kyrpidia tusciae (strain DSM 2912 / NBRC 15312 / T2) (Bacillus tusciae).